The chain runs to 201 residues: dTTP/UTP pyrophosphatase (201 aa).

Catalysis depends on Asp75, which acts as the Proton acceptor.

It belongs to the Maf family. YhdE subfamily. The cofactor is a divalent metal cation.

It is found in the cytoplasm. It catalyses the reaction dTTP + H2O = dTMP + diphosphate + H(+). It carries out the reaction UTP + H2O = UMP + diphosphate + H(+). Its function is as follows. Nucleoside triphosphate pyrophosphatase that hydrolyzes dTTP and UTP. May have a dual role in cell division arrest and in preventing the incorporation of modified nucleotides into cellular nucleic acids. The polypeptide is dTTP/UTP pyrophosphatase (Pseudomonas fluorescens (strain ATCC BAA-477 / NRRL B-23932 / Pf-5)).